Here is an 86-residue protein sequence, read N- to C-terminus: Small ribosomal subunit protein bS20 (86 aa).

Over residues 1 to 11 (MANIKQQKKRN) the composition is skewed to basic residues. A disordered region spans residues 1–20 (MANIKQQKKRNKTNEKRRLQ).

Belongs to the bacterial ribosomal protein bS20 family.

Its function is as follows. Binds directly to 16S ribosomal RNA. The protein is Small ribosomal subunit protein bS20 of Aster yellows witches'-broom phytoplasma (strain AYWB).